Here is a 484-residue protein sequence, read N- to C-terminus: MSGEQELGITESKEHSPGEWYAEVVQKAGLADYAPMGGFIVTRPRGYAIWERIQNNLDGWFKDTGVQNAYFPLFIPESYLEKEKDVVEGFDPEVAWVTHGGHNELEERLAVRPTSESIIAPFMAQWTRSHRDLPMRLNQWCSVVRWEATETKPFFRTKEFLWQEGHTAHADEDGAWEETMTRLDQYARLYEEVMAMPPLKGRKPPHDKFPGAHTTTTIETLMPDGKTVQAATSHYLGTSFGEAFDITYADADEEENTAHTTSWGLSWRAMGALIMTHSDDQGLVLPPALAPDQVVVVPIWQEDNKDEVIDYAADLAAELDEADVRVELDDREHRNPGFKYNEHELHGVPLRVEIGPHEVEDGEATLVHRPDGETETVDRDGIADTVTDHLDTVHAKLYASAEETLEGEIREAESREEILGTIGQHGGYVKCGWCGDEDCEEPIKDAIAAEIVMVPLDRDEEPIHEDCAICGEDAEETAYFAKSY.

Belongs to the class-II aminoacyl-tRNA synthetase family. ProS type 3 subfamily. In terms of assembly, homodimer.

Its subcellular location is the cytoplasm. It catalyses the reaction tRNA(Pro) + L-proline + ATP = L-prolyl-tRNA(Pro) + AMP + diphosphate. Catalyzes the attachment of proline to tRNA(Pro) in a two-step reaction: proline is first activated by ATP to form Pro-AMP and then transferred to the acceptor end of tRNA(Pro). In Haloarcula marismortui (strain ATCC 43049 / DSM 3752 / JCM 8966 / VKM B-1809) (Halobacterium marismortui), this protein is Proline--tRNA ligase.